We begin with the raw amino-acid sequence, 207 residues long: Outer-membrane lipoprotein LolB (207 aa).

A signal peptide spans 1–21 (MTLPDFRLIRLLPLASLVLTA). C22 is lipidated: N-palmitoyl cysteine. C22 carries S-diacylglycerol cysteine lipidation.

The protein belongs to the LolB family. Monomer.

The protein resides in the cell outer membrane. Its function is as follows. Plays a critical role in the incorporation of lipoproteins in the outer membrane after they are released by the LolA protein. In Citrobacter koseri (strain ATCC BAA-895 / CDC 4225-83 / SGSC4696), this protein is Outer-membrane lipoprotein LolB.